Consider the following 654-residue polypeptide: Carboxypeptidase Z (654 aa).

A signal peptide spans 1–20 (MPTMPLLLAALAALAVLALA). The 123-residue stretch at 43 to 165 (THSATCVDLH…APEEEGCYDP (123 aa)) folds into the FZ domain. 5 disulfide bridges follow: cysteine 48/cysteine 114, cysteine 56/cysteine 107, cysteine 98/cysteine 134, cysteine 123/cysteine 162, and cysteine 127/cysteine 151. N-linked (GlcNAc...) asparagine glycosylation occurs at asparagine 62. The region spanning 191-507 (AHHSYAQMVR…EPLLNFLEMV (317 aa)) is the Peptidase M14 domain. 2 residues coordinate Zn(2+): histidine 253 and glutamate 256. A glycan (N-linked (GlcNAc...) asparagine) is linked at asparagine 286. Zn(2+) is bound at residue histidine 385. Residue glutamate 477 is the Proton donor/acceptor of the active site. Residues 596–630 (FLPGPSRALPRFQDPQREPTQMDFEPPRARRQPAS) are disordered.

The protein belongs to the peptidase M14 family. Requires Zn(2+) as cofactor.

It is found in the secreted. Its subcellular location is the extracellular space. The protein resides in the extracellular matrix. Inhibited by 2-mercaptomethyl-3-guanidinoethylthiopropanoic acid (MGTA) and guanidinoethylmercaptosuccinic acid (GEMSA). Inhibited by chelating agents such as EDTA and EGTA. Functionally, cleaves substrates with C-terminal arginine residues. Probably modulates the Wnt signaling pathway, by cleaving some undefined protein. May play a role in cleavage during prohormone processing. In Mus musculus (Mouse), this protein is Carboxypeptidase Z (Cpz).